Consider the following 86-residue polypeptide: Large ribosomal subunit protein eL43 (86 aa).

Positions 38, 41, 57, and 60 each coordinate Zn(2+). The segment at 38-60 (CPFCGSTGTVRRVSVGVWSCRKC) adopts a C4-type zinc-finger fold.

It belongs to the eukaryotic ribosomal protein eL43 family. Putative zinc-binding subfamily. As to quaternary structure, part of the 50S ribosomal subunit. The cofactor is Zn(2+).

In terms of biological role, binds to the 23S rRNA. The protein is Large ribosomal subunit protein eL43 of Aeropyrum pernix (strain ATCC 700893 / DSM 11879 / JCM 9820 / NBRC 100138 / K1).